An 869-amino-acid polypeptide reads, in one-letter code: Alanine--tRNA ligase (869 aa).

Positions 559, 563, 660, and 664 each coordinate Zn(2+).

The protein belongs to the class-II aminoacyl-tRNA synthetase family. Zn(2+) is required as a cofactor.

The protein localises to the cytoplasm. The catalysed reaction is tRNA(Ala) + L-alanine + ATP = L-alanyl-tRNA(Ala) + AMP + diphosphate. In terms of biological role, catalyzes the attachment of alanine to tRNA(Ala) in a two-step reaction: alanine is first activated by ATP to form Ala-AMP and then transferred to the acceptor end of tRNA(Ala). Also edits incorrectly charged Ser-tRNA(Ala) and Gly-tRNA(Ala) via its editing domain. This Herminiimonas arsenicoxydans protein is Alanine--tRNA ligase.